We begin with the raw amino-acid sequence, 279 residues long: Elongation factor Ts (279 aa).

The segment at 80–83 (TDFV) is involved in Mg(2+) ion dislocation from EF-Tu.

It belongs to the EF-Ts family.

The protein localises to the cytoplasm. Functionally, associates with the EF-Tu.GDP complex and induces the exchange of GDP to GTP. It remains bound to the aminoacyl-tRNA.EF-Tu.GTP complex up to the GTP hydrolysis stage on the ribosome. The sequence is that of Elongation factor Ts (tsf) from Borreliella burgdorferi (strain ATCC 35210 / DSM 4680 / CIP 102532 / B31) (Borrelia burgdorferi).